An 829-amino-acid chain; its full sequence is Isethionate sulfite-lyase (829 aa).

In terms of domain architecture, PFL spans 31–699 (ERVFNILDSF…VVSATPNGRL (669 aa)). Residues Arg188, Gln192, 467–469 (CTE), and Arg677 contribute to the 2-hydroxyethane-1-sulfonate site. Residue Cys467 is the Cysteine radical intermediate of the active site. Glu469 serves as the catalytic Proton acceptor. One can recognise a Glycine radical domain in the interval 706–829 (DGSSASHGAD…LIARTQHDAM (124 aa)). At Gly804 the chain carries Glycine radical.

This sequence belongs to the glycyl radical enzyme (GRE) family. Homodimer. In terms of processing, requires the activating protein IslB to generate the key active site glycyl radical on Gly-804 that is involved in catalysis.

The catalysed reaction is 2-hydroxyethane-1-sulfonate = acetaldehyde + sulfite + H(+). It functions in the pathway organosulfur degradation; alkanesulfonate degradation. In terms of biological role, involved in an anaerobic respiration pathway that converts the sulfonate isethionate (2-hydroxyethanesulfonate) to ammonia, acetate and sulfide. Catalyzes the radical-mediated C-S bond cleavage of isethionate (2-hydroxyethanesulfonate) to form sulfite and acetaldehyde. The protein is Isethionate sulfite-lyase of Oleidesulfovibrio alaskensis (strain ATCC BAA-1058 / DSM 17464 / G20) (Desulfovibrio alaskensis).